The chain runs to 170 residues: MASVLIREAKEGDCGNILRMIRELAEYEKLSDQVKISEEALRADGFGENPFFHCLVAEILPAPGEPQGSCMVGYGLYYFIYSTWTGRNIYLEDIYVKPEYRGQGIGSKIIKKVAEVALDKGCSQFRLAVLDWNKKAVDLYKTLGARDLTEAEGWHSFRFEGEAMRELAGK.

An N-acetyltransferase domain is found at 4–166 (VLIREAKEGD…FRFEGEAMRE (163 aa)). 27-28 (YE) is a binding site for substrate. The residue at position 29 (Lys29) is an N6-acetyllysine. Glu92 is a substrate binding site. Acetyl-CoA-binding positions include 94–96 (IYV), 102–107 (GQGIGS), 133–135 (NKK), and Tyr140. Residue Tyr140 is the Proton donor of the active site. Glu152 is a binding site for substrate.

The protein belongs to the acetyltransferase family. As to quaternary structure, homodimer.

The protein localises to the cytoplasm. It carries out the reaction S-(2-aminoethyl)-L-cysteine + acetyl-CoA = S-(2-acetamidoethyl)-L-cysteine + CoA + H(+). It catalyses the reaction an alkane-alpha,omega-diamine + acetyl-CoA = an N-acetylalkane-alpha,omega-diamine + CoA + H(+). Its function is as follows. Catalyzes the N-acetylation of the amino acid thialysine (S-(2-aminoethyl)-L-cysteine), a L-lysine analog with the 4-methylene group substituted with a sulfur. May also catalyze acetylation of polyamines, such as norspermidine, spermidine or spermine. However, ability to acetylate polyamines is weak, suggesting that it does not act as a diamine acetyltransferase in vivo. In Sus scrofa (Pig), this protein is Thialysine N-epsilon-acetyltransferase.